The following is a 256-amino-acid chain: Hemin import ATP-binding protein HmuV (256 aa).

The ABC transporter domain maps to 2 to 238; that stretch reads ISAQNLVYSL…QALTMLYGAD (237 aa). 34–41 is an ATP binding site; it reads GPNGAGKS.

Belongs to the ABC transporter superfamily. Heme (hemin) importer (TC 3.A.1.14.5) family. As to quaternary structure, the complex is composed of two ATP-binding proteins (HmuV), two transmembrane proteins (HmuU) and a solute-binding protein (HmuT).

Its subcellular location is the cell inner membrane. Part of the ABC transporter complex HmuTUV involved in hemin import. Responsible for energy coupling to the transport system. This chain is Hemin import ATP-binding protein HmuV, found in Escherichia coli O6:K15:H31 (strain 536 / UPEC).